Here is a 302-residue protein sequence, read N- to C-terminus: tRNA-cytidine(32) 2-sulfurtransferase (302 aa).

The PP-loop motif motif lies at 45 to 50 (SGGKDS). The [4Fe-4S] cluster site is built by cysteine 120, cysteine 123, and cysteine 211.

It belongs to the TtcA family. In terms of assembly, homodimer. The cofactor is Mg(2+). It depends on [4Fe-4S] cluster as a cofactor.

The protein resides in the cytoplasm. It carries out the reaction cytidine(32) in tRNA + S-sulfanyl-L-cysteinyl-[cysteine desulfurase] + AH2 + ATP = 2-thiocytidine(32) in tRNA + L-cysteinyl-[cysteine desulfurase] + A + AMP + diphosphate + H(+). It functions in the pathway tRNA modification. In terms of biological role, catalyzes the ATP-dependent 2-thiolation of cytidine in position 32 of tRNA, to form 2-thiocytidine (s(2)C32). The sulfur atoms are provided by the cysteine/cysteine desulfurase (IscS) system. This chain is tRNA-cytidine(32) 2-sulfurtransferase, found in Aeromonas hydrophila subsp. hydrophila (strain ATCC 7966 / DSM 30187 / BCRC 13018 / CCUG 14551 / JCM 1027 / KCTC 2358 / NCIMB 9240 / NCTC 8049).